Reading from the N-terminus, the 287-residue chain is Ret finger protein-like 4A (287 aa).

The segment at 11-53 (CPVCLKDLEEAVQLKCGYACCLQCLNSLQKEPDGEGLLCRFCS) adopts an RING-type; degenerate zinc-finger fold. A B30.2/SPRY domain is found at 78-276 (EPKLKSVLTM…LSICSVINPS (199 aa)).

In terms of assembly, interacts with PSMB1, UBE2A and CCNB1.

It is found in the cytoplasm. Its subcellular location is the nucleus. This Homo sapiens (Human) protein is Ret finger protein-like 4A (RFPL4A).